The following is a 416-amino-acid chain: 3-oxoacyl-[acyl-carrier-protein] synthase 1 (416 aa).

The Ketosynthase family 3 (KS3) domain maps to 11–415 (FPSVVVTAVT…GHNVALAFGR (405 aa)). Catalysis depends on for beta-ketoacyl synthase activity residues Cys171, His311, and His345. Substrate contacts are provided by His311 and His345.

Belongs to the thiolase-like superfamily. Beta-ketoacyl-ACP synthases family.

Its subcellular location is the cytoplasm. It catalyses the reaction an ultra-long-chain mono-unsaturated fatty acyl-[ACP] + malonyl-[ACP] + H(+) = a 3-oxo-ultra-long-chain mono-unsaturated fatty acyl-[ACP] + holo-[ACP] + CO2. It functions in the pathway lipid metabolism; mycolic acid biosynthesis. Functionally, part of the mycobacterial fatty acid elongation system FAS-II, which is involved in mycolic acid biosynthesis. Catalyzes the elongation of long chain acyl-ACP substrates by the addition of two carbons from malonyl-ACP to an acyl acceptor. Involved in the initial extension of the mycolate chain and forms monounsaturated fatty acids that averaged 40 carbons in length. The sequence is that of 3-oxoacyl-[acyl-carrier-protein] synthase 1 (kasA) from Mycobacterium tuberculosis (strain ATCC 35801 / TMC 107 / Erdman).